The chain runs to 182 residues: Dual-action ribosomal maturation protein DarP (182 aa).

The protein belongs to the DarP family.

Its subcellular location is the cytoplasm. Functionally, member of a network of 50S ribosomal subunit biogenesis factors which assembles along the 30S-50S interface, preventing incorrect 23S rRNA structures from forming. Promotes peptidyl transferase center (PTC) maturation. This chain is Dual-action ribosomal maturation protein DarP, found in Yersinia pseudotuberculosis serotype O:1b (strain IP 31758).